We begin with the raw amino-acid sequence, 906 residues long: Protein translocase subunit SecA (906 aa).

ATP is bound by residues Gln86, 104-108 (GEGKT), and Asp499. Basic and acidic residues predominate over residues 834–847 (KLQKNMRESREDPA). Residues 834 to 887 (KLQKNMRESREDPAFSKYNAGSSLETDLKPVVSRVDPKDRNPDDPTSWGRVSRN) are disordered. 4 residues coordinate Zn(2+): Cys890, Cys892, Cys901, and His902.

It belongs to the SecA family. Monomer and homodimer. Part of the essential Sec protein translocation apparatus which comprises SecA, SecYEG and auxiliary proteins SecDF-YajC and YidC. The cofactor is Zn(2+).

It is found in the cell inner membrane. It localises to the cytoplasm. It catalyses the reaction ATP + H2O + cellular proteinSide 1 = ADP + phosphate + cellular proteinSide 2.. Part of the Sec protein translocase complex. Interacts with the SecYEG preprotein conducting channel. Has a central role in coupling the hydrolysis of ATP to the transfer of proteins into and across the cell membrane, serving both as a receptor for the preprotein-SecB complex and as an ATP-driven molecular motor driving the stepwise translocation of polypeptide chains across the membrane. In Rickettsia felis (strain ATCC VR-1525 / URRWXCal2) (Rickettsia azadi), this protein is Protein translocase subunit SecA.